A 250-amino-acid chain; its full sequence is 5'-nucleotidase SurE (250 aa).

A divalent metal cation is bound by residues Asp8, Asp9, Ser40, and Asn94.

This sequence belongs to the SurE nucleotidase family. It depends on a divalent metal cation as a cofactor.

It is found in the cytoplasm. It catalyses the reaction a ribonucleoside 5'-phosphate + H2O = a ribonucleoside + phosphate. In terms of biological role, nucleotidase that shows phosphatase activity on nucleoside 5'-monophosphates. This is 5'-nucleotidase SurE from Wolbachia pipientis wMel.